The chain runs to 719 residues: Putative alpha-1,3-mannosyltransferase MNT4 (719 aa).

The Cytoplasmic portion of the chain corresponds to methionine 1–histidine 4. The chain crosses the membrane as a helical span at residues leucine 5–phenylalanine 22. Residues arginine 23–aspartate 719 are Lumenal-facing. Residues asparagine 148, asparagine 273, and asparagine 449 are each glycosylated (N-linked (GlcNAc...) asparagine).

Belongs to the MNN1/MNT family.

Its subcellular location is the golgi apparatus membrane. It participates in protein modification; protein glycosylation. In terms of biological role, responsible for addition of the terminal mannose residues to the outer chain of core N-linked polysaccharides and to O-linked mannotriose. Implicated in late Golgi modifications. The protein is Putative alpha-1,3-mannosyltransferase MNT4 (MNT4) of Candida albicans (strain SC5314 / ATCC MYA-2876) (Yeast).